Here is a 346-residue protein sequence, read N- to C-terminus: Methylthioribose-1-phosphate isomerase (346 aa).

Substrate-binding positions include 44–46, Arg87, and Gln194; that span reads RGA. Asp235 functions as the Proton donor in the catalytic mechanism. 245-246 is a substrate binding site; the sequence is NK.

Belongs to the eIF-2B alpha/beta/delta subunits family. MtnA subfamily.

The catalysed reaction is 5-(methylsulfanyl)-alpha-D-ribose 1-phosphate = 5-(methylsulfanyl)-D-ribulose 1-phosphate. It participates in amino-acid biosynthesis; L-methionine biosynthesis via salvage pathway; L-methionine from S-methyl-5-thio-alpha-D-ribose 1-phosphate: step 1/6. In terms of biological role, catalyzes the interconversion of methylthioribose-1-phosphate (MTR-1-P) into methylthioribulose-1-phosphate (MTRu-1-P). The sequence is that of Methylthioribose-1-phosphate isomerase from Desulforamulus reducens (strain ATCC BAA-1160 / DSM 100696 / MI-1) (Desulfotomaculum reducens).